The chain runs to 77 residues: DNA-directed RNA polymerase subunit Rpo5 (77 aa).

The protein belongs to the archaeal Rpo5/eukaryotic RPB5 RNA polymerase subunit family. As to quaternary structure, part of the RNA polymerase complex.

It is found in the cytoplasm. It catalyses the reaction RNA(n) + a ribonucleoside 5'-triphosphate = RNA(n+1) + diphosphate. Functionally, DNA-dependent RNA polymerase (RNAP) catalyzes the transcription of DNA into RNA using the four ribonucleoside triphosphates as substrates. This chain is DNA-directed RNA polymerase subunit Rpo5, found in Methanothermobacter thermautotrophicus (strain ATCC 29096 / DSM 1053 / JCM 10044 / NBRC 100330 / Delta H) (Methanobacterium thermoautotrophicum).